We begin with the raw amino-acid sequence, 368 residues long: Putative phospho-2-dehydro-3-deoxyheptonate aldolase (368 aa).

The protein belongs to the class-I DAHP synthase family.

The catalysed reaction is D-erythrose 4-phosphate + phosphoenolpyruvate + H2O = 7-phospho-2-dehydro-3-deoxy-D-arabino-heptonate + phosphate. The protein operates within metabolic intermediate biosynthesis; chorismate biosynthesis; chorismate from D-erythrose 4-phosphate and phosphoenolpyruvate: step 1/7. Functionally, stereospecific condensation of phosphoenolpyruvate (PEP) and D-erythrose-4-phosphate (E4P) giving rise to 3-deoxy-D-arabino-heptulosonate-7-phosphate (DAHP). The sequence is that of Putative phospho-2-dehydro-3-deoxyheptonate aldolase from Schizosaccharomyces pombe (strain 972 / ATCC 24843) (Fission yeast).